We begin with the raw amino-acid sequence, 92 residues long: Small ribosomal subunit protein uS19 (92 aa).

The protein belongs to the universal ribosomal protein uS19 family.

Its function is as follows. Protein S19 forms a complex with S13 that binds strongly to the 16S ribosomal RNA. This is Small ribosomal subunit protein uS19 from Methylorubrum extorquens (strain CM4 / NCIMB 13688) (Methylobacterium extorquens).